A 353-amino-acid chain; its full sequence is uncharacterized protein (353 aa).

Zn(2+)-binding residues include Cys40, His70, Cys100, Cys103, Cys106, Cys114, and Cys158.

Belongs to the zinc-containing alcohol dehydrogenase family. Requires Zn(2+) as cofactor.

This is an uncharacterized protein from Escherichia coli (strain K12).